Reading from the N-terminus, the 241-residue chain is MSSSTQPAQTSPSPSKITLSADSQLNGFEWWRRSLQYQTGLGLTPSEKAQYEYDYFHRNLDQKCDTCNDHLKWVLAYSPSVRFMMDHIQKLNKSNEPVPRNKIVCQTCDFTKGGGFDPNHGIVLCSNYIRSKWQLEDILAHELVHVYDYMKFNVNMLDLRQHACTEIRASMLSGECRVWNEMKKTGMGNFGKKFQECIRRRAVLSVEANPVCKSREEAEKAVDVVWKSCFNDTRPFERVYR.

His141 contributes to the a divalent metal cation binding site. The active site involves Glu142. His145 contributes to the a divalent metal cation binding site.

Belongs to the peptidase M76 family.

It is found in the mitochondrion inner membrane. Functionally, has a dual role in the assembly of mitochondrial ATPase. Acts as a protease that removes N-terminal residues of mitochondrial ATPase CF(0) subunit 6 at the intermembrane space side. Also involved in the correct assembly of the membrane-embedded ATPase CF(0) particle, probably mediating association of subunit 6 with the subunit 9 ring. The polypeptide is Mitochondrial inner membrane protease ATP23 (ATP23) (Lodderomyces elongisporus (strain ATCC 11503 / CBS 2605 / JCM 1781 / NBRC 1676 / NRRL YB-4239) (Yeast)).